The sequence spans 257 residues: Imidazole glycerol phosphate synthase subunit HisF (257 aa).

Active-site residues include Asp-11 and Asp-130.

It belongs to the HisA/HisF family. As to quaternary structure, heterodimer of HisH and HisF.

The protein resides in the cytoplasm. The catalysed reaction is 5-[(5-phospho-1-deoxy-D-ribulos-1-ylimino)methylamino]-1-(5-phospho-beta-D-ribosyl)imidazole-4-carboxamide + L-glutamine = D-erythro-1-(imidazol-4-yl)glycerol 3-phosphate + 5-amino-1-(5-phospho-beta-D-ribosyl)imidazole-4-carboxamide + L-glutamate + H(+). Its pathway is amino-acid biosynthesis; L-histidine biosynthesis; L-histidine from 5-phospho-alpha-D-ribose 1-diphosphate: step 5/9. Its function is as follows. IGPS catalyzes the conversion of PRFAR and glutamine to IGP, AICAR and glutamate. The HisF subunit catalyzes the cyclization activity that produces IGP and AICAR from PRFAR using the ammonia provided by the HisH subunit. The sequence is that of Imidazole glycerol phosphate synthase subunit HisF from Shewanella baltica (strain OS223).